The primary structure comprises 213 residues: tRNA (guanine-N(7)-)-methyltransferase (213 aa).

4 residues coordinate S-adenosyl-L-methionine: Glu44, Glu69, Asp96, and Asp118. Asp118 is a catalytic residue. Lys122 lines the substrate pocket. Residues 124–129 (RHEKRR) are interaction with RNA. Residues Asp154 and 191 to 194 (TEYE) contribute to the substrate site.

It belongs to the class I-like SAM-binding methyltransferase superfamily. TrmB family. Homodimer.

It carries out the reaction guanosine(46) in tRNA + S-adenosyl-L-methionine = N(7)-methylguanosine(46) in tRNA + S-adenosyl-L-homocysteine. Its pathway is tRNA modification; N(7)-methylguanine-tRNA biosynthesis. In terms of biological role, catalyzes the formation of N(7)-methylguanine at position 46 (m7G46) in tRNA. This chain is tRNA (guanine-N(7)-)-methyltransferase, found in Bacillus subtilis (strain 168).